The chain runs to 433 residues: Glucose-1-phosphate adenylyltransferase (433 aa).

Residues tyrosine 117, glycine 182, 197–198 (EK), and serine 215 contribute to the alpha-D-glucose 1-phosphate site.

The protein belongs to the bacterial/plant glucose-1-phosphate adenylyltransferase family. Homotetramer.

It catalyses the reaction alpha-D-glucose 1-phosphate + ATP + H(+) = ADP-alpha-D-glucose + diphosphate. It participates in glycan biosynthesis; glycogen biosynthesis. In terms of biological role, involved in the biosynthesis of ADP-glucose, a building block required for the elongation reactions to produce glycogen. Catalyzes the reaction between ATP and alpha-D-glucose 1-phosphate (G1P) to produce pyrophosphate and ADP-Glc. This is Glucose-1-phosphate adenylyltransferase from Nitrosomonas europaea (strain ATCC 19718 / CIP 103999 / KCTC 2705 / NBRC 14298).